A 308-amino-acid chain; its full sequence is ADP-L-glycero-D-manno-heptose-6-epimerase (308 aa).

NADP(+) contacts are provided by residues 10–11 (FI), 31–32 (DN), Lys-38, Lys-53, 75–79 (EGACS), and Asn-92. The active-site Proton acceptor is Tyr-139. Lys-143 contacts NADP(+). Substrate is bound at residue Asn-168. NADP(+)-binding residues include Val-169 and Lys-177. Lys-177 (proton acceptor) is an active-site residue. Substrate is bound by residues Ser-179, His-186, 200–203 (FAGS), Arg-208, and Tyr-271.

It belongs to the NAD(P)-dependent epimerase/dehydratase family. HldD subfamily. Homopentamer. NADP(+) is required as a cofactor.

The catalysed reaction is ADP-D-glycero-beta-D-manno-heptose = ADP-L-glycero-beta-D-manno-heptose. It participates in nucleotide-sugar biosynthesis; ADP-L-glycero-beta-D-manno-heptose biosynthesis; ADP-L-glycero-beta-D-manno-heptose from D-glycero-beta-D-manno-heptose 7-phosphate: step 4/4. Its pathway is bacterial outer membrane biogenesis; LOS core biosynthesis. Its function is as follows. Catalyzes the interconversion between ADP-D-glycero-beta-D-manno-heptose and ADP-L-glycero-beta-D-manno-heptose via an epimerization at carbon 6 of the heptose. This Haemophilus influenzae (strain ATCC 51907 / DSM 11121 / KW20 / Rd) protein is ADP-L-glycero-D-manno-heptose-6-epimerase.